The following is a 482-amino-acid chain: UDP-N-acetylmuramate--L-alanine ligase (482 aa).

Residue 111 to 117 participates in ATP binding; the sequence is GTHGKTT.

It belongs to the MurCDEF family.

Its subcellular location is the cytoplasm. The catalysed reaction is UDP-N-acetyl-alpha-D-muramate + L-alanine + ATP = UDP-N-acetyl-alpha-D-muramoyl-L-alanine + ADP + phosphate + H(+). It functions in the pathway cell wall biogenesis; peptidoglycan biosynthesis. In terms of biological role, cell wall formation. The chain is UDP-N-acetylmuramate--L-alanine ligase from Symbiobacterium thermophilum (strain DSM 24528 / JCM 14929 / IAM 14863 / T).